We begin with the raw amino-acid sequence, 181 residues long: Ribulose bisphosphate carboxylase small subunit, chloroplastic 1 (181 aa).

The N-terminal 57 residues, 1–57, are a transit peptide targeting the chloroplast; it reads MASSIVSSAAAATRSNVAQASMVAPFTGLKSAASFPVTKKNNNVDITSLASNGGRVR.

The protein belongs to the RuBisCO small chain family. In terms of assembly, (Microbial infection) Binds to tobamovirus movement protein; this interaction seems required for viral systemic movement. As to quaternary structure, heterohexadecamer of 8 large and 8 small subunits.

It is found in the plastid. The protein localises to the chloroplast. It localises to the cell junction. The protein resides in the plasmodesma. Its function is as follows. RuBisCO catalyzes two reactions: the carboxylation of D-ribulose 1,5-bisphosphate, the primary event in carbon dioxide fixation, as well as the oxidative fragmentation of the pentose substrate. Both reactions occur simultaneously and in competition at the same active site. Although the small subunit is not catalytic it is essential for maximal activity. Involved in antiviral defenses. This chain is Ribulose bisphosphate carboxylase small subunit, chloroplastic 1, found in Solanum lycopersicum (Tomato).